The following is a 118-amino-acid chain: Iron-sulfur cluster insertion protein ErpA (118 aa).

Iron-sulfur cluster-binding residues include C46, C110, and C112.

Belongs to the HesB/IscA family. In terms of assembly, homodimer. It depends on iron-sulfur cluster as a cofactor.

Required for insertion of 4Fe-4S clusters for at least IspG. This is Iron-sulfur cluster insertion protein ErpA from Psychromonas ingrahamii (strain DSM 17664 / CCUG 51855 / 37).